The primary structure comprises 302 residues: MTNKLKKDHAFWAAVCLLLSIVPELLNALPEEDDDTINTDSELRPMKPLHTFCAMKAEDGPCKAMIRSYYFNMNSHQCEEFIYGGCRGNKNRFDTLEECRKTCIPGYKKTTIKTTSGAEKPDFCFLEEDPGICRGFMTRYFYNNQSKQCEQFKYGGCLGNSNNFETLEECRNTCEDPVNEVQKGDYVTNQITVTDRTTVNNVVIPQATKAPSQWDYDGPSWCLEPADSGLCKASEKRFYYNPAIGKCRQFNYTGCGGNNNNFTTKQDCNRACKKDSSKKSSKRAKTQRRRKSFVKVMYENIH.

An N-terminal signal peptide occupies residues 1–28; sequence MTNKLKKDHAFWAAVCLLLSIVPELLNA. BPTI/Kunitz inhibitor domains follow at residues 53-103, 124-174, and 222-272; these read CAMK…RKTC, CFLE…RNTC, and CLEP…NRAC. Intrachain disulfides connect cysteine 53–cysteine 103, cysteine 62–cysteine 86, cysteine 78–cysteine 99, cysteine 124–cysteine 174, cysteine 133–cysteine 157, cysteine 149–cysteine 170, cysteine 222–cysteine 272, cysteine 231–cysteine 255, and cysteine 247–cysteine 268. N-linked (GlcNAc...) asparagine glycosylation occurs at asparagine 144. N-linked (GlcNAc...) asparagine glycans are attached at residues asparagine 251 and asparagine 261.

In terms of tissue distribution, most abundant in heart, lung, kidney, and aortic endothelial cells.

The protein localises to the secreted. Its function is as follows. Inhibits factor X (X(a)) directly and, in a Xa-dependent way, inhibits VIIa/tissue factor activity, presumably by forming a quaternary Xa/LACI/VIIa/TF complex. It possesses an antithrombotic action and also the ability to associate with lipoproteins in plasma. The protein is Tissue factor pathway inhibitor (Tfpi) of Rattus norvegicus (Rat).